The following is a 207-amino-acid chain: Methylated-DNA--protein-cysteine methyltransferase (207 aa).

A Zn(2+)-binding site is contributed by Cys5. A Phosphoserine modification is found at Ser14. Zn(2+)-binding residues include Cys24, His29, and His85. DNA contacts are provided by Thr95, Tyr114, Gln115, Asn123, and Arg128. The Nucleophile; methyl group acceptor role is filled by Cys145. A DNA-binding site is contributed by Ser151. Ser201 is subject to Phosphoserine.

Belongs to the MGMT family. Requires Zn(2+) as cofactor.

The protein localises to the nucleus. It catalyses the reaction a 6-O-methyl-2'-deoxyguanosine in DNA + L-cysteinyl-[protein] = S-methyl-L-cysteinyl-[protein] + a 2'-deoxyguanosine in DNA. The enzyme catalyses a 4-O-methyl-thymidine in DNA + L-cysteinyl-[protein] = a thymidine in DNA + S-methyl-L-cysteinyl-[protein]. Involved in the cellular defense against the biological effects of O6-methylguanine (O6-MeG) and O4-methylthymine (O4-MeT) in DNA. Repairs the methylated nucleobase in DNA by stoichiometrically transferring the methyl group to a cysteine residue in the enzyme. This is a suicide reaction: the enzyme is irreversibly inactivated. In Homo sapiens (Human), this protein is Methylated-DNA--protein-cysteine methyltransferase (MGMT).